The following is a 393-amino-acid chain: Lipid-A-disaccharide synthase (393 aa).

This sequence belongs to the LpxB family.

It catalyses the reaction a lipid X + a UDP-2-N,3-O-bis[(3R)-3-hydroxyacyl]-alpha-D-glucosamine = a lipid A disaccharide + UDP + H(+). It functions in the pathway bacterial outer membrane biogenesis; LPS lipid A biosynthesis. Functionally, condensation of UDP-2,3-diacylglucosamine and 2,3-diacylglucosamine-1-phosphate to form lipid A disaccharide, a precursor of lipid A, a phosphorylated glycolipid that anchors the lipopolysaccharide to the outer membrane of the cell. In Granulibacter bethesdensis (strain ATCC BAA-1260 / CGDNIH1), this protein is Lipid-A-disaccharide synthase.